Consider the following 62-residue polypeptide: Photosystem II reaction center protein Z (62 aa).

2 helical membrane passes run 8–28 and 41–61; these read AVFALIAISFLLVIGVPVVLA and FSGASLWIGLVFLVGILNSFI.

Belongs to the PsbZ family. PSII is composed of 1 copy each of membrane proteins PsbA, PsbB, PsbC, PsbD, PsbE, PsbF, PsbH, PsbI, PsbJ, PsbK, PsbL, PsbM, PsbT, PsbY, PsbZ, Psb30/Ycf12, at least 3 peripheral proteins of the oxygen-evolving complex and a large number of cofactors. It forms dimeric complexes.

It localises to the plastid. It is found in the chloroplast thylakoid membrane. Functionally, may control the interaction of photosystem II (PSII) cores with the light-harvesting antenna, regulates electron flow through the 2 photosystem reaction centers. PSII is a light-driven water plastoquinone oxidoreductase, using light energy to abstract electrons from H(2)O, generating a proton gradient subsequently used for ATP formation. In Marchantia polymorpha (Common liverwort), this protein is Photosystem II reaction center protein Z.